The following is a 1007-amino-acid chain: A disintegrin and metalloproteinase with thrombospondin motifs 1 (1007 aa).

Positions 1–20 (MPCCLWAALSLLLAVVGAGA) are cleaved as a signal peptide. N130 and N228 each carry an N-linked (GlcNAc...) asparagine glycan. A Peptidase M12B domain is found at 184 to 370 (LWLELAIVAD…WSSCSKEQFH (187 aa)). Zn(2+) is bound at residue H322. The Metal-binding signature appears at 322–333 (HELAHLLGLTHD). E323 is an active-site residue. Positions 326 and 332 each coordinate Zn(2+). 4 disulfides stabilise this stretch: C338/C364, C494/C530, C498/C536, and C509/C520. A TSP type-1 1 domain is found at 482–537 (TPEWGDWEEWSACNADCGYGLRTRTRKCKYRGFVSESACEGAGSQVATCWAGSSCA). N561, N610, N626, N737, N777, and N865 each carry an N-linked (GlcNAc...) asparagine glycan. 2 consecutive TSP type-1 domains span residues 833–899 (CEFV…NRIP) and 900–952 (CPVY…RRCP). 3 disulfide bridges follow: C912-C946, C916-C951, and C927-C935.

The cofactor is Zn(2+).

Its subcellular location is the secreted. It localises to the extracellular space. The protein localises to the extracellular matrix. In terms of biological role, involved in larval molting and metamorphosis. May degrade extracellular matrix (ECM) and basement membrane (BM) during the development of organs to allow degeneration and remodeling of tissues. This Bombyx mori (Silk moth) protein is A disintegrin and metalloproteinase with thrombospondin motifs 1.